The following is a 116-amino-acid chain: MRHRKAYRKLSKPTPQRKALFKALLISLFKHGKIVTTLPRAKEVTRIAEKLLTIAKEDSVHHRRLVYAWLQDRELVRKVFVEIAPKYKDRNGGYIRILKLGMRRGDAAEQAVIEFV.

It belongs to the bacterial ribosomal protein bL17 family. In terms of assembly, part of the 50S ribosomal subunit. Contacts protein L32.

This chain is Large ribosomal subunit protein bL17, found in Dictyoglomus turgidum (strain DSM 6724 / Z-1310).